The primary structure comprises 38 residues: Photosystem II reaction center protein X (38 aa).

The helical transmembrane segment at 8-28 (FLWSLVAGAVVLGALFGAIIF) threads the bilayer.

It belongs to the PsbX family. Type 1 subfamily. PSII is composed of 1 copy each of membrane proteins PsbA, PsbB, PsbC, PsbD, PsbE, PsbF, PsbH, PsbI, PsbJ, PsbK, PsbL, PsbM, PsbT, PsbX, PsbY, PsbZ, Psb30/Ycf12, peripheral proteins PsbO, CyanoQ (PsbQ), PsbU, PsbV and a large number of cofactors. It forms dimeric complexes.

Its subcellular location is the cellular thylakoid membrane. In terms of biological role, involved in the binding and/or turnover of quinones at the Q(B) site of photosystem II (PSII). PSII is a light-driven water plastoquinone oxidoreductase, using light energy to abstract electrons from H(2)O, generating a proton gradient subsequently used for ATP formation. The polypeptide is Photosystem II reaction center protein X (Synechococcus sp. (strain JA-2-3B'a(2-13)) (Cyanobacteria bacterium Yellowstone B-Prime)).